Consider the following 612-residue polypeptide: Peroxisomal carnitine O-octanoyltransferase (612 aa).

At Met-1 the chain carries N-acetylmethionine. Lys-40 and Lys-57 each carry N6-succinyllysine. His-327 functions as the Proton acceptor in the catalytic mechanism. Residues Lys-406 and 410-417 each bind CoA; that span reads KNKMLHPD. Lys-406 is subject to N6-acetyllysine; alternate. Lys-406 carries the post-translational modification N6-succinyllysine; alternate. (R)-carnitine is bound by residues Tyr-439, Thr-441, and Thr-452. The Microbody targeting signal motif lies at 610–612; the sequence is THL.

This sequence belongs to the carnitine/choline acetyltransferase family. Monomer.

It is found in the peroxisome. The enzyme catalyses octanoyl-CoA + (R)-carnitine = O-octanoyl-(R)-carnitine + CoA. The catalysed reaction is 4,8-dimethylnonanoyl-CoA + (R)-carnitine = O-4,8-dimethylnonanoyl-(R)-carnitine + CoA. Its pathway is lipid metabolism; fatty acid beta-oxidation. Beta-oxidation of fatty acids. The highest activity concerns the C6 to C10 chain length substrate. Converts the end product of pristanic acid beta oxidation, 4,8-dimethylnonanoyl-CoA, to its corresponding carnitine ester. The chain is Peroxisomal carnitine O-octanoyltransferase (CROT) from Homo sapiens (Human).